A 481-amino-acid polypeptide reads, in one-letter code: Ankyrin repeat, SAM and basic leucine zipper domain-containing protein 1 (481 aa).

The segment covering 1–16 (MASGGLRGLAVAGGGE) has biased composition (gly residues). The interval 1 to 23 (MASGGLRGLAVAGGGESSDSEDD) is disordered. Phosphoserine is present on residues serine 17, serine 18, and serine 20. 6 ANK repeats span residues 45–74 (EKNE…SVDS), 78–107 (YGWT…NASF), 110–144 (DKQT…DPNV), 148–177 (RLMT…EVNT), 181–210 (NGYT…NKML), and 214–243 (DGKI…PLEG). The SAM domain occupies 272 to 334 (SYTAFGDLEI…KILSALKELE (63 aa)).

As to quaternary structure, interacts with DDX4, PIWIL1, RANBP9 and TDRD1.

Its subcellular location is the cytoplasm. Functionally, plays a central role during spermatogenesis by repressing transposable elements and preventing their mobilization, which is essential for the germline integrity. Acts via the piRNA metabolic process, which mediates the repression of transposable elements during meiosis by forming complexes composed of piRNAs and Piwi proteins and governs the methylation and subsequent repression of transposons. Its association with pi-bodies suggests a participation in the primary piRNAs metabolic process. Required prior to the pachytene stage to facilitate the production of multiple types of piRNAs, including those associated with repeats involved in the regulation of retrotransposons. May act by mediating protein-protein interactions during germ cell maturation. The protein is Ankyrin repeat, SAM and basic leucine zipper domain-containing protein 1 (ASZ1) of Microcebus murinus (Gray mouse lemur).